The following is a 272-amino-acid chain: Putative B3 domain-containing protein Os02g0455900 (272 aa).

The TF-B3 DNA-binding region spans 30 to 134 (GKVLMPSDVS…RFFICCRCTC (105 aa)). Residues 189 to 227 (TASLGCAAAQPPQVPPTPTPRRRRRSMMVHPEPPEHTTD) form a disordered region.

The protein localises to the nucleus. The sequence is that of Putative B3 domain-containing protein Os02g0455900 from Oryza sativa subsp. japonica (Rice).